The sequence spans 237 residues: Pyrimidine 5'-nucleotidase PynA (237 aa).

The active-site Nucleophile is D9. The Mg(2+) site is built by D9, D11, and D181. Residue D11 is the Proton donor of the active site.

This sequence belongs to the HAD-like hydrolase superfamily. YjjG family. Homodimer. It depends on Mg(2+) as a cofactor. Mn(2+) is required as a cofactor.

It localises to the cytoplasm. It carries out the reaction a ribonucleoside 5'-phosphate + H2O = a ribonucleoside + phosphate. Functionally, nucleotidase that shows high phosphatase activity toward non-canonical pyrimidine nucleotides and three canonical nucleoside 5'-monophosphates (UMP, dUMP and dTMP), and no activity against IMP, UDP, GMP, AMP, UTP or pNPP. Appears to function as a house-cleaning nucleotidase in vivo, since the general nucleotidase activity of it allows it to protect cells against non-canonical pyrimidine derivatives such as 5-fluoro-2'-deoxyuridine monophosphate (5-FdUMP), and prevents the incorporation of potentially mutagenic nucleotides such as 5-bromo-2'-deoxyuridine (5-BrdU) into DNA. Is strictly specific to pyrimidine substrates with 5'-monophosphates and shows no activity against nucleoside di- and triphosphates. The sequence is that of Pyrimidine 5'-nucleotidase PynA from Streptococcus pneumoniae (strain ATCC BAA-255 / R6).